A 311-amino-acid polypeptide reads, in one-letter code: Porphobilinogen deaminase (311 aa).

Cys-245 is subject to S-(dipyrrolylmethanemethyl)cysteine.

This sequence belongs to the HMBS family. In terms of assembly, monomer. Dipyrromethane serves as cofactor.

The catalysed reaction is 4 porphobilinogen + H2O = hydroxymethylbilane + 4 NH4(+). It functions in the pathway porphyrin-containing compound metabolism; protoporphyrin-IX biosynthesis; coproporphyrinogen-III from 5-aminolevulinate: step 2/4. Tetrapolymerization of the monopyrrole PBG into the hydroxymethylbilane pre-uroporphyrinogen in several discrete steps. The protein is Porphobilinogen deaminase of Deinococcus deserti (strain DSM 17065 / CIP 109153 / LMG 22923 / VCD115).